Consider the following 175-residue polypeptide: ATP synthase subunit b (175 aa).

The chain crosses the membrane as a helical span at residues 18 to 38; that stretch reads VTSWEPFVANLIAFILMVVIL.

The protein belongs to the ATPase B chain family. F-type ATPases have 2 components, F(1) - the catalytic core - and F(0) - the membrane proton channel. F(1) has five subunits: alpha(3), beta(3), gamma(1), delta(1), epsilon(1). F(0) has three main subunits: a(1), b(2) and c(10-14). The alpha and beta chains form an alternating ring which encloses part of the gamma chain. F(1) is attached to F(0) by a central stalk formed by the gamma and epsilon chains, while a peripheral stalk is formed by the delta and b chains.

It localises to the cell inner membrane. Functionally, f(1)F(0) ATP synthase produces ATP from ADP in the presence of a proton or sodium gradient. F-type ATPases consist of two structural domains, F(1) containing the extramembraneous catalytic core and F(0) containing the membrane proton channel, linked together by a central stalk and a peripheral stalk. During catalysis, ATP synthesis in the catalytic domain of F(1) is coupled via a rotary mechanism of the central stalk subunits to proton translocation. Component of the F(0) channel, it forms part of the peripheral stalk, linking F(1) to F(0). In Akkermansia muciniphila (strain ATCC BAA-835 / DSM 22959 / JCM 33894 / BCRC 81048 / CCUG 64013 / CIP 107961 / Muc), this protein is ATP synthase subunit b.